The primary structure comprises 209 residues: Large ribosomal subunit protein uL3 (209 aa).

This sequence belongs to the universal ribosomal protein uL3 family. As to quaternary structure, part of the 50S ribosomal subunit. Forms a cluster with proteins L14 and L19.

One of the primary rRNA binding proteins, it binds directly near the 3'-end of the 23S rRNA, where it nucleates assembly of the 50S subunit. The protein is Large ribosomal subunit protein uL3 of Nitratidesulfovibrio vulgaris (strain DSM 19637 / Miyazaki F) (Desulfovibrio vulgaris).